Reading from the N-terminus, the 218-residue chain is MRGTTSNGAAPSGAGVAVVIAVKRLADAKTRLAPIFAPHDRETVVLAMLVDTVAAAAAVAAVTVVTPDPAAAEAARALGAQVLDDPTPAGHPDPLNNALRAAEAAVRATVPNVVALQGDLPALQAQELSEAIAAARTRPRSFVGDRHGTGTSALFAFGVPLDPRFGPDSAERHRRSGAVELTGSWPGLRYDIDTPDDLLAARRLGVGTQTARAVGAER.

Residues Thr151, Gly166, and Ser169 each contribute to the phosphoenolpyruvate site.

Belongs to the CofC family.

The enzyme catalyses phosphoenolpyruvate + GTP + H(+) = enolpyruvoyl-2-diphospho-5'-guanosine + diphosphate. The protein operates within cofactor biosynthesis; coenzyme F420 biosynthesis. In terms of biological role, guanylyltransferase that catalyzes the activation of phosphoenolpyruvate (PEP) as enolpyruvoyl-2-diphospho-5'-guanosine, via the condensation of PEP with GTP. It is involved in the biosynthesis of coenzyme F420, a hydride carrier cofactor. The protein is Phosphoenolpyruvate guanylyltransferase of Mycobacterium sp. (strain KMS).